A 1594-amino-acid chain; its full sequence is NAD-specific glutamate dehydrogenase (1594 aa).

Residue K816 is part of the active site.

The protein belongs to the Glu/Leu/Phe/Val dehydrogenases family. In terms of assembly, interacts with (unphosphorylated) GarA.

The catalysed reaction is L-glutamate + NAD(+) + H2O = 2-oxoglutarate + NH4(+) + NADH + H(+). Its activity is regulated as follows. Activity is inhibited by unphosphorylated GarA. Stimulated by manganese and magnesium. Catalyzes the reversible conversion of L-glutamate to 2-oxoglutarate. Highly specific for NAD. This Mycolicibacterium smegmatis (strain ATCC 700084 / mc(2)155) (Mycobacterium smegmatis) protein is NAD-specific glutamate dehydrogenase (gdh).